An 870-amino-acid polypeptide reads, in one-letter code: MHEQYQPREIEAAAQSIWDAQKSFEVREQPGKDTFYCLSMFPYPSGKLHMGHVRNYTIGDVIARYQRMQGRNVLQPMGWDAFGMPAENAAMKNRVAPAKWTYENIAYMKSQLKSLGLGIDWSREVTTCKPDYYRWEQWLFTRLFEKGVIYRKNGTVNWDPVDQTVLANEQVIDGRGWRSGALVEKREIPMYYFRITAYAEELLQSLDSLPGWPEQVKTMQRNWIGKSYGADIVFDYDQASVGEAGQLRVYSTRPDTLMGATYVAVAAEHPLAQRAAANDPALAAFIAECKAGSVAEADMATMEKKGLATGQFVVHPLTGDRLPVFVANYVLWGYGEGAVMAVPAHDERDFEFANKYGLPIRQVYAAEGRDFSASEWQAWYADKEGLTTVDSGKYDGKSFTEAFDAIVADLEATGHGARKTQFRLRDWGISRQRYWGCPIPIIHCEACGDVPVPEEQLPVVLPEDVVPDGTGSPLAKMPEFYECACPKCGKPAKRETDTMDTFVESSWYYARYASPQYAGGMVDPQAADHWLPVDQYIGGIEHAILHLLYARFFHKLMRDEGLLSSDEPFENLLTQGMVVAETYYRTLENGGKDWFNPADVEVERDARAKVIGARLKSDGLPVEIGGTEKMSKSKNNGVDPQAMIDAYGADTCRLFMMFAAPPELSLEWSDAGVEGASRFLRRVWRLAHAHVGAGLPGTLDKARLSDAQKEIRRAIHLAIRQASQDVGQHHKFNTAIAQVMTLMNVLEKAPAADEQDRALLQEGLETVALLLAPITPHICHALWEALGKDGLIIDAAWPTVDETALVQDTLTLVVQVNGKLRGEIQVPAAASREEIEAAARANENVLRFTEGLAIRKVIVVPGKLVNIVAN.

Residues 42–52 (PYPSGKLHMGH) carry the 'HIGH' region motif. The 'KMSKS' region signature appears at 629–633 (KMSKS). Lys-632 serves as a coordination point for ATP.

The protein belongs to the class-I aminoacyl-tRNA synthetase family.

The protein localises to the cytoplasm. It catalyses the reaction tRNA(Leu) + L-leucine + ATP = L-leucyl-tRNA(Leu) + AMP + diphosphate. The polypeptide is Leucine--tRNA ligase (Azotobacter vinelandii (strain DJ / ATCC BAA-1303)).